We begin with the raw amino-acid sequence, 521 residues long: Probable protein kinase UbiB (521 aa).

Residues Ser119–Ser497 enclose the Protein kinase domain. Residues Val125 to Val133 and Lys151 contribute to the ATP site. Asp286 (proton acceptor) is an active-site residue. A helical membrane pass occupies residues Gln496–Val516.

The protein belongs to the ABC1 family. UbiB subfamily.

It localises to the cell inner membrane. Its pathway is cofactor biosynthesis; ubiquinone biosynthesis [regulation]. Functionally, is probably a protein kinase regulator of UbiI activity which is involved in aerobic coenzyme Q (ubiquinone) biosynthesis. The polypeptide is Probable protein kinase UbiB (Acidovorax sp. (strain JS42)).